We begin with the raw amino-acid sequence, 487 residues long: Cyclic AMP-dependent transcription factor ATF-2 (487 aa).

Residues 7-31 form a C2H2-type zinc finger; sequence FLCTAPGCGQRFTNEDHLAVHKHKH. Position 34 is a phosphothreonine; by PKC/PRKCH (Thr-34). Ser-44 carries the post-translational modification Phosphoserine. The residue at position 51 (Thr-51) is a Phosphothreonine; by MAPK11 and MAPK14. Thr-53 carries the phosphothreonine; by MAPK1, MAPK3, MAPK11, MAPK12, MAPK14 and PLK3 modification. A Phosphothreonine; by VRK1 modification is found at Thr-55. Phosphoserine occurs at positions 72 and 94. Phosphothreonine is present on Thr-98. Ser-103 bears the Phosphoserine; by PKC/PRKCA and PKC/PRKCB mark. Disordered regions lie at residues 106–137 and 241–355; these read EEPS…PLAQ and PGIP…RQKR. Ser-118 carries the phosphoserine modification. Positions 264 to 275 are enriched in polar residues; the sequence is LTQQHPPVTNGD. Positions 278–281 are essential for its histone acetyltransferase activity; that stretch reads KGHG. Residues 300–316 are compositionally biased toward low complexity; the sequence is PATSTTETPASPAHTTP. Position 310 is a phosphoserine (Ser-310). At Ser-322 the chain carries Phosphoserine; by PKC/PRKCA and PKC/PRKCB. Positions 328–345 are enriched in basic and acidic residues; the sequence is AANEDPDEKRRKFLERNR. A bZIP domain is found at 334 to 397; that stretch reads DEKRRKFLER…AQLKQLLLAH (64 aa). The basic motif stretch occupies residues 336–356; it reads KRRKFLERNRAAASRCRQKRK. N6-acetyllysine is present on Lys-339. A Phosphoserine; by PKC/PRKCA and PKC/PRKCB modification is found at Ser-349. Lys-356 is modified (N6-acetyllysine). The interval 362–390 is leucine-zipper; it reads LEKKAEDLSSLNGQLQSEVTLLRNEVAQL. A Nuclear export signal motif is present at residues 387–396; the sequence is VAQLKQLLLA. The interval 407 to 453 is disordered; sequence KKSGYHTADKDDSSEDLSVPSSPHTEAIQHSSVSTSNGVSSTSKAEA. Phosphoserine is present on residues Ser-424 and Ser-428. The segment covering 425–436 has biased composition (polar residues); sequence VPSSPHTEAIQH. Positions 437–449 are enriched in low complexity; that stretch reads SSVSTSNGVSSTS. Phosphoserine; by ATM is present on residues Ser-472 and Ser-480.

Belongs to the bZIP family. ATF subfamily. Binds DNA as a dimer and can form a homodimer in the absence of DNA. Can form a heterodimer with JUN. Heterodimerization is essential for its transcriptional activity. Interacts with SMAD3 and SMAD4. Interacts with the HK1/VDAC1 complex. Interacts with NBN, MRE11, XPO1, KAT5 and CUL3. Binds through its N-terminal region to UTF1 which acts as a coactivator of ATF2 transcriptional activity. Post-translationally, phosphorylation of Thr-51 by MAPK14 and MAPK11, and at Thr-53 by MAPK1/ERK2, MAPK3/ERK1, MAPK11, MAPK12 and MAPK14 in response to external stimulus like insulin causes increased transcriptional activity. Phosphorylated by PLK3 following hyperosmotic stress. Also phosphorylated and activated by JNK and CaMK4. ATM-mediated phosphorylation at Ser-472 and Ser-480 stimulates its function in DNA damage response. Phosphorylation at Ser-44, Thr-55 and Ser-103 activates its transcriptional activity. Phosphorylation at Thr-51 or Thr-53 enhances acetylation of histones H2B and H4.

The protein resides in the nucleus. The protein localises to the cytoplasm. It is found in the mitochondrion outer membrane. Functionally, transcriptional activator which regulates the transcription of various genes, including those involved in anti-apoptosis, cell growth, and DNA damage response. Dependent on its binding partner, binds to CRE (cAMP response element) consensus sequences (5'-TGACGTCA-3') or to AP-1 (activator protein 1) consensus sequences (5'-TGACTCA-3'). In the nucleus, contributes to global transcription and the DNA damage response, in addition to specific transcriptional activities that are related to cell development, proliferation and death. In the cytoplasm, interacts with and perturbs HK1- and VDAC1-containing complexes at the mitochondrial outer membrane, thereby impairing mitochondrial membrane potential, inducing mitochondrial leakage and promoting cell death. The phosphorylated form (mediated by ATM) plays a role in the DNA damage response and is involved in the ionizing radiation (IR)-induced S phase checkpoint control and in the recruitment of the MRN complex into the IR-induced foci (IRIF). Exhibits histone acetyltransferase (HAT) activity which specifically acetylates histones H2B and H4 in vitro. In concert with CUL3 and RBX1, promotes the degradation of KAT5 thereby attenuating its ability to acetylate and activate ATM. Can elicit oncogenic or tumor suppressor activities depending on the tissue or cell type. The protein is Cyclic AMP-dependent transcription factor ATF-2 (Atf2) of Mus musculus (Mouse).